Consider the following 147-residue polypeptide: METLITISRWLAKQHVVTWCVQQEGELWCANAFYLFDAQKVAFYILTEEKTRHAQMSGPQAAVAGTVNGQPKTVALIRGVQFKGEIRRLEGEESDLARQAYNRRFPVARMLSAPVWEIRLDEIKFTDNTLGFGKKMIWLRDSGTEQA.

Belongs to the UPF0306 family.

The protein is UPF0306 protein YhbP of Shigella sonnei (strain Ss046).